Here is a 1413-residue protein sequence, read N- to C-terminus: DNA-directed RNA polymerase subunit beta' (1413 aa).

Zn(2+) is bound by residues Cys-70, Cys-72, Cys-85, and Cys-88. Positions 460, 462, and 464 each coordinate Mg(2+). Zn(2+) contacts are provided by Cys-819, Cys-893, Cys-900, and Cys-903.

This sequence belongs to the RNA polymerase beta' chain family. In terms of assembly, the RNAP catalytic core consists of 2 alpha, 1 beta, 1 beta' and 1 omega subunit. When a sigma factor is associated with the core the holoenzyme is formed, which can initiate transcription. It depends on Mg(2+) as a cofactor. The cofactor is Zn(2+).

It carries out the reaction RNA(n) + a ribonucleoside 5'-triphosphate = RNA(n+1) + diphosphate. In terms of biological role, DNA-dependent RNA polymerase catalyzes the transcription of DNA into RNA using the four ribonucleoside triphosphates as substrates. This is DNA-directed RNA polymerase subunit beta' from Burkholderia vietnamiensis (strain G4 / LMG 22486) (Burkholderia cepacia (strain R1808)).